The sequence spans 156 residues: Small ribosomal subunit protein uS7 (156 aa).

It belongs to the universal ribosomal protein uS7 family. In terms of assembly, part of the 30S ribosomal subunit. Contacts proteins S9 and S11.

In terms of biological role, one of the primary rRNA binding proteins, it binds directly to 16S rRNA where it nucleates assembly of the head domain of the 30S subunit. Is located at the subunit interface close to the decoding center, probably blocks exit of the E-site tRNA. In Mesomycoplasma hyopneumoniae (strain 232) (Mycoplasma hyopneumoniae), this protein is Small ribosomal subunit protein uS7.